The following is a 232-amino-acid chain: Chalcone synthase (232 aa).

Cysteine 7 is an active-site residue.

Belongs to the thiolase-like superfamily. Chalcone/stilbene synthases family.

It catalyses the reaction (E)-4-coumaroyl-CoA + 3 malonyl-CoA + 3 H(+) = 2',4,4',6'-tetrahydroxychalcone + 3 CO2 + 4 CoA. It participates in secondary metabolite biosynthesis; flavonoid biosynthesis. Functionally, the primary product of this enzyme is 4,2',4',6'-tetrahydroxychalcone (also termed naringenin-chalcone or chalcone) which can under specific conditions spontaneously isomerize into naringenin. The sequence is that of Chalcone synthase (CHS) from Malus domestica (Apple).